A 2260-amino-acid polypeptide reads, in one-letter code: Protein Ycf2 (2260 aa).

An ATP-binding site is contributed by 1614–1621 (GSIGTGRS).

This sequence belongs to the Ycf2 family.

Its subcellular location is the plastid. The protein localises to the chloroplast stroma. Functionally, probable ATPase of unknown function. Its presence in a non-photosynthetic plant (Epifagus virginiana) and experiments in tobacco indicate that it has an essential function which is probably not related to photosynthesis. In Dioscorea elephantipes (Elephant's foot yam), this protein is Protein Ycf2.